Consider the following 221-residue polypeptide: Putative NAD(P)H nitroreductase YfkO (221 aa).

Residues 15-17 (RHA) and 73-75 (QKQ) contribute to the FMN site. 157 to 162 (AAAQIG) is an NAD(+) binding site. Residues 169-170 (EG) and Arg-211 each bind FMN.

The protein belongs to the nitroreductase family. In terms of assembly, monomer. The cofactor is FMN.

The chain is Putative NAD(P)H nitroreductase YfkO (yfkO) from Bacillus subtilis (strain 168).